We begin with the raw amino-acid sequence, 81 residues long: Kappa-theraphotoxin-Gr2c (81 aa).

The N-terminal stretch at 1-19 is a signal peptide; the sequence is MKAFFVILGLALLCAYSFA. Positions 20-50 are excised as a propeptide; the sequence is LEEQDQLSLRNDLLTVMFAENSELTPETEER. 3 cysteine pairs are disulfide-bonded: Cys52–Cys66, Cys59–Cys71, and Cys65–Cys75.

It belongs to the neurotoxin 30 (phrixotoxin) family. As to expression, expressed by the venom gland.

It localises to the secreted. In terms of biological role, inhibits sodium channels Nav1.1/SCN1A (IC(50)=5.7 uM), Nav1.2/SCN2A (IC(50)=12 uM), Nav1.4/SCN4A (IC(50)=4 uM), Nav1.6/SCN8A (IC(50)=6.6 uM), Nav1.7/SCN9A (IC(50)=13.6-1030 nM), potassium channels Kv11.1/KCNH2 (IC(50)=4.7 uM), as well as high-voltage-gated calcium channels Cav1.2/CACNA1C (IC(50)= nM). Also blocks mechanosensitive ion channels (also named stretch-activated channels or SACs) and the hypotonic cell swelling induced calcium increase associated with the activation of such channels. It can thus be useful in treating cardiac ventricular disturbances. Also induces analgesia in mammals. The protein is Kappa-theraphotoxin-Gr2c of Grammostola rosea (Chilean rose tarantula).